The following is a 71-amino-acid chain: UPF0337 protein RPA4418 (71 aa).

The tract at residues 1–54 (MGSTMDKIKGQANELAGKAKQGIGEATGSDKLKGEGAIQEAKGHGQQALGNAKD) is disordered.

Belongs to the UPF0337 (CsbD) family.

This Rhodopseudomonas palustris (strain ATCC BAA-98 / CGA009) protein is UPF0337 protein RPA4418.